Consider the following 317-residue polypeptide: Ret finger protein-like 3 (317 aa).

The RING-type zinc-finger motif lies at 40–82 (CPVCSDYLEKPMSLECGCTVCLKCINSLQKEPHGEDLLCCCCS). The 195-residue stretch at 107–301 (EPKLKKILQM…DQGVLSICPL (195 aa)) folds into the B30.2/SPRY domain.

As to expression, expressed during neurogenesis in differentiating human embryonic stem cells and in the developing human neocortex.

It is found in the cytoplasm. The protein localises to the nucleus. Its function is as follows. (Microbial infection) Stimulates the activity of Human Immunodeficiency Virus 1/HIV-1 pre-integration complex. This chain is Ret finger protein-like 3 (RFPL3), found in Homo sapiens (Human).